Consider the following 29-residue polypeptide: Conotoxin SIVC (29 aa).

At Ala-1 the chain carries N-acetylalanine; partial. Residue Pro-2 is modified to 4-hydroxyproline. O-linked (HexNAc...) threonine glycosylation is found at Thr-7 and Thr-9. A 4-hydroxyproline mark is found at Pro-18 and Pro-22. Cysteine amide is present on Cys-29.

The protein belongs to the conotoxin A superfamily. O-linked glycans consist of Hex4-HexNAc2 hexasaccharides. Post-translationally, N-terminus is found to be free and N-acetylated, depending on the fraction studied. In terms of processing, contains 3 disulfide bonds. As to expression, expressed by the venom duct. Low expression in the distal venom duct sections.

It localises to the secreted. Probable neurotoxin with ion channel inhibitor activity. This chain is Conotoxin SIVC, found in Conus striatus (Striated cone).